The chain runs to 423 residues: Protein TylM3 (423 aa).

Residues 1 to 21 (MNTAAGPTGTAAGGTTAPAAA) are compositionally biased toward low complexity. Disordered stretches follow at residues 1–26 (MNTAAGPTGTAAGGTTAPAAAHDLSR) and 117–149 (GSALDAAHGNPGGPPLPGGWPHRPPDREERDDP). The span at 139–149 (RPPDREERDDP) shows a compositional bias: basic and acidic residues.

The protein belongs to the cytochrome P450 family.

It functions in the pathway antibiotic biosynthesis; tylosin biosynthesis. Its function is as follows. Involved in the biosynthesis of the macrolide antibiotic tylosin derived from the polyketide lactone tylactone. TylM3 is required for the glycosylation of the 5-hydroxyl group of tylactone to yield 5-O-mycaminosytylactone. The sequence is that of Protein TylM3 from Streptomyces fradiae (Streptomyces roseoflavus).